We begin with the raw amino-acid sequence, 316 residues long: uncharacterized protein (316 aa).

4 BNR repeats span residues 62–73 (FISDSQGLKFSP), 124–135 (KISVDNGLTWSN), 196–207 (FISRDGGLTWRV), and 242–253 (YFSLDQGRTWNQ).

This is an uncharacterized protein from Saccharomyces cerevisiae (strain ATCC 204508 / S288c) (Baker's yeast).